A 398-amino-acid chain; its full sequence is 1-deoxy-D-xylulose 5-phosphate reductoisomerase (398 aa).

Positions 14, 15, 16, 17, 42, and 128 each coordinate NADPH. 1-deoxy-D-xylulose 5-phosphate is bound at residue K129. An NADPH-binding site is contributed by E130. D154 lines the Mn(2+) pocket. 1-deoxy-D-xylulose 5-phosphate contacts are provided by S155, E156, S185, and H208. Mn(2+) is bound at residue E156. G214 is an NADPH binding site. The 1-deoxy-D-xylulose 5-phosphate site is built by S221, N226, K227, and E230. Residue E230 participates in Mn(2+) binding.

Belongs to the DXR family. The cofactor is Mg(2+). It depends on Mn(2+) as a cofactor.

It catalyses the reaction 2-C-methyl-D-erythritol 4-phosphate + NADP(+) = 1-deoxy-D-xylulose 5-phosphate + NADPH + H(+). It participates in isoprenoid biosynthesis; isopentenyl diphosphate biosynthesis via DXP pathway; isopentenyl diphosphate from 1-deoxy-D-xylulose 5-phosphate: step 1/6. Catalyzes the NADPH-dependent rearrangement and reduction of 1-deoxy-D-xylulose-5-phosphate (DXP) to 2-C-methyl-D-erythritol 4-phosphate (MEP). This Dechloromonas aromatica (strain RCB) protein is 1-deoxy-D-xylulose 5-phosphate reductoisomerase.